The primary structure comprises 178 residues: Ribosome maturation factor RimM (178 aa).

The PRC barrel domain occupies 99–178 (QGEFYWRDLI…EITVDWDPGF (80 aa)).

This sequence belongs to the RimM family. In terms of assembly, binds ribosomal protein uS19.

It is found in the cytoplasm. Functionally, an accessory protein needed during the final step in the assembly of 30S ribosomal subunit, possibly for assembly of the head region. Essential for efficient processing of 16S rRNA. May be needed both before and after RbfA during the maturation of 16S rRNA. It has affinity for free ribosomal 30S subunits but not for 70S ribosomes. The sequence is that of Ribosome maturation factor RimM from Pseudoalteromonas translucida (strain TAC 125).